Consider the following 1789-residue polypeptide: Mediator of RNA polymerase II transcription subunit 12 (1789 aa).

Disordered regions lie at residues 1–138 (MTSR…QRRG), 156–288 (SSPT…GSSA), 1592–1656 (IGTA…GWHA), and 1707–1727 (THLN…NPTR). 2 stretches are compositionally biased toward low complexity: residues 25 to 66 (SQQR…QQQQ) and 81 to 98 (TRNN…TLNN). Over residues 107–124 (QDPTSIVSPADPSGSSPA) the composition is skewed to polar residues. A compositionally biased stretch (basic and acidic residues) spans 220–229 (AVPDHSRREQ). 4 stretches are compositionally biased toward low complexity: residues 271–288 (RSSA…GSSA), 1592–1628 (IGTA…SAVS), 1647–1656 (QQAQAQGWHA), and 1707–1716 (THLNLGNNSN).

The protein belongs to the Mediator complex subunit 12 family. In terms of assembly, component of the srb8-11 complex, which itself associates with the Mediator complex.

The protein localises to the nucleus. Its function is as follows. Component of the srb8-11 complex. The srb8-11 complex is a regulatory module of the Mediator complex which is itself involved in regulation of basal and activated RNA polymerase II-dependent transcription. The srb8-11 complex may be involved in the transcriptional repression of a subset of genes regulated by Mediator. It may inhibit the association of the Mediator complex with RNA polymerase II to form the holoenzyme complex. This is Mediator of RNA polymerase II transcription subunit 12 (srb8) from Neurospora crassa (strain ATCC 24698 / 74-OR23-1A / CBS 708.71 / DSM 1257 / FGSC 987).